A 158-amino-acid polypeptide reads, in one-letter code: Ethylene-responsive transcription factor ERF120 (158 aa).

A DNA-binding region (AP2/ERF) is located at residues 86 to 147 (KHKGVRKKPS…SARRGTKNGE (62 aa)). The disordered stretch occupies residues 134 to 158 (VGRRSARRGTKNGEEASTKKTTEKN). The segment covering 144–158 (KNGEEASTKKTTEKN) has biased composition (basic and acidic residues).

It belongs to the AP2/ERF transcription factor family. ERF subfamily.

It is found in the nucleus. Functionally, probably acts as a transcriptional activator. Binds to the GCC-box pathogenesis-related promoter element. May be involved in the regulation of gene expression by stress factors and by components of stress signal transduction pathways. This chain is Ethylene-responsive transcription factor ERF120 (ERF120), found in Arabidopsis thaliana (Mouse-ear cress).